Reading from the N-terminus, the 194-residue chain is Large ribosomal subunit protein uL6z/uL6y (194 aa).

A Phosphothreonine modification is found at Thr75.

Belongs to the universal ribosomal protein uL6 family.

This chain is Large ribosomal subunit protein uL6z/uL6y (RPL9B), found in Arabidopsis thaliana (Mouse-ear cress).